We begin with the raw amino-acid sequence, 657 residues long: Histidine ammonia-lyase (657 aa).

The 5-imidazolinone (Ala-Gly) cross-link spans 253–255 (ASG). 2,3-didehydroalanine (Ser) is present on Ser-254. Thr-396 bears the Phosphothreonine mark. Position 635 is a phosphoserine (Ser-635). At Thr-637 the chain carries Phosphothreonine. At Ser-648 the chain carries Phosphoserine.

This sequence belongs to the PAL/histidase family. Post-translationally, contains an active site 4-methylidene-imidazol-5-one (MIO), which is formed autocatalytically by cyclization and dehydration of residues Ala-Ser-Gly.

The enzyme catalyses L-histidine = trans-urocanate + NH4(+). Its pathway is amino-acid degradation; L-histidine degradation into L-glutamate; N-formimidoyl-L-glutamate from L-histidine: step 1/3. This chain is Histidine ammonia-lyase (HAL), found in Homo sapiens (Human).